The primary structure comprises 199 residues: Recombination protein RecR (199 aa).

A C4-type zinc finger spans residues 57 to 72 (CNLCNNFSEQEICPLC). The region spanning 80-175 (TLLCIVEMPS…QVSRIARGLP (96 aa)) is the Toprim domain.

It belongs to the RecR family.

Its function is as follows. May play a role in DNA repair. It seems to be involved in an RecBC-independent recombinational process of DNA repair. It may act with RecF and RecO. This is Recombination protein RecR from Methylobacillus flagellatus (strain ATCC 51484 / DSM 6875 / VKM B-1610 / KT).